Here is a 257-residue protein sequence, read N- to C-terminus: MQTKPINQLDFVDSELTSFVSHLETTYLDQNKGAFIVTANPEIGFEAMQNPRYEAVLSSADFILPDGIGVVMVSKLIGKPLQSRIAGYDLFTSLLDKADQKKKRVFFYGAAKHVIAETIERVKRDFPGIEIAGYSDGYVKDQREVADKIAASTPDMVFVALGYPNQEFFIHKYRHLFPQAVAVGLGGSFDVFSGNVKRAPSFFIRFHLEWMYRLLTNPARWRRMLSIPKYVTAVLKHERASAKPHYTGQVKDQSRHL.

The protein belongs to the glycosyltransferase 26 family. TagA/TarA subfamily.

It carries out the reaction UDP-N-acetyl-alpha-D-mannosamine + N-acetyl-alpha-D-glucosaminyl-di-trans,octa-cis-undecaprenyl diphosphate = N-acetyl-beta-D-mannosaminyl-(1-&gt;4)-N-acetyl-alpha-D-glucosaminyl di-trans,octa-cis-undecaprenyl diphosphate + UDP + H(+). Its pathway is cell wall biogenesis; poly(ribitol phosphate) teichoic acid biosynthesis. Its function is as follows. Catalyzes the conversion of GlcNAc-PP-undecaprenol into ManNAc-GlcNAc-PP-undecaprenol, the first committed lipid intermediate in the de novo synthesis of teichoic acid. The sequence is that of N-acetylglucosaminyldiphosphoundecaprenol N-acetyl-beta-D-mannosaminyltransferase from Bacillus spizizenii (strain ATCC 23059 / NRRL B-14472 / W23) (Bacillus subtilis subsp. spizizenii).